Here is a 577-residue protein sequence, read N- to C-terminus: Arginine--tRNA ligase (577 aa).

A 'HIGH' region motif is present at residues Ala-132–His-142.

The protein belongs to the class-I aminoacyl-tRNA synthetase family. As to quaternary structure, monomer.

It is found in the cytoplasm. The catalysed reaction is tRNA(Arg) + L-arginine + ATP = L-arginyl-tRNA(Arg) + AMP + diphosphate. This Janthinobacterium sp. (strain Marseille) (Minibacterium massiliensis) protein is Arginine--tRNA ligase.